Here is a 1351-residue protein sequence, read N- to C-terminus: MFTKILKKFFSSYEKLKDNEDENEPSSNSTNNFYKTCPEDNSSKWSKISFNWVTKLIMKGYLKESLEMNDIYDLPELNKVQTTSKLLEDIDLSNNSNYTLIKHIYKKFLPKNKYALVSNLFIIIFTFLSPICLKFLINYISIQDENEKSILKGILLCCLLCLCVLGQSISQELFYWFGIKNGFDVRGALAAKIFEKTLKLSNASRKEYKSGKIMNIMSIDVANISEYFWTHHINIVSHFIQILSLVGLLCYVVGPSGLVGFGVMVIALPINAMLCAKSSNYLEKSLEYSDSRTNLTSELITNIRPFKMYAWENFFINKIDGQRKQELKNIFLRIFYSILDHMMIETNATLVLVSTFATYSLNGNTMSLDVTFTAMTIFSKLEVPLIRLPYDIFKAIGLIPSVKRVQNFLKSSESLKYNKNFKNENQKITTTKENNNQHGQDNDIIVENCTFQWNEPENNNIFELNYGDNEEEENQDESINKKENDNEEFNYKLKDINLIVPKGKLTMICGVVGSGKTSLIFGLIGEIYKLNGSVSGVPNNISFTSQQPFLLSASLRENILFGNEFDIERYKKVIESTALTKDIVNLAGLDLTEIGERGINLSGGQKQRISLARALYANSDCFIFDEPLSAVDPEVASHLFDHCIQGELMRNKTRILVTHQLQFIPYADHIIVLNSNGQLIQGTYQELNEKGIDFKSILKTKEIKKNVENETDSEELIKNEIEIENEIIDVNNAISDKNDPNLIEKAKLLVKEDKNEGEVEFNVYKKYFSYGSSGVTLFITISLFFVGQAIFKVSDFWLTIWTERSIEGKSDSFYIGYYLLIFGTFVVILMIRILLLCRITFNVGKNLHSALLKSVTYASCRFFDTNPSGRILNRFSKDTSDIDIHMFDILTEVSMCFSELTIGLISIVFIIPIMVIPLIILSIAYYILQRLYRPSARELNRWESITVSPIFSLLQECYNGLLTIRTYKQESRFIKEMFDNININLGCFFYSFAVHRWVSMRLEVMGWIMVFFTSLIATLFISNNGLAALSVTTALSLNGYLSWGIRRIVDLEVKMNSFQRIQSYIEIPKEGNKLVSTNSNEVDNHTIKDADLVNWPNKGIIEFKNVEIKYRPNSEPNLKDLSFKVQSSEKIGIVGRTGAGKTTIASSLFRMVECSKGLILIDGIDISKVQLQKLRSSIGIVPQDPFIFTGTIRSNIDPFNEFTDFEIWESVEKVKLKDAINSMPLKLETALQENGDNGFSYGQKQLLCLCRTILKNFKIILMDEATSSIDYHTAQLIKQTIQENFKDCTTLTIAHRLETIIDCNKIAVIDSGQLIEFDTPSNLMNIPNSKFNKLIKSQTDYNNNEKTIINK.

Residues 112–397 (NKYALVSNLF…LPYDIFKAIG (286 aa)) form the ABC transmembrane type-1 1 domain. 3 helical membrane-spanning segments follow: residues 120-140 (LFII…INYI), 149-169 (SILK…GQSI), and 248-268 (LLCY…VIAL). Positions 474 to 700 (NQDESINKKE…GIDFKSILKT (227 aa)) constitute an ABC transporter 1 domain. 510–517 (GVVGSGKT) contacts ATP. The stretch at 701 to 734 (KEIKKNVENETDSEELIKNEIEIENEIIDVNNAI) forms a coiled coil. 6 helical membrane-spanning segments follow: residues 771-791 (GSSG…QAIF), 815-835 (IGYY…RILL), 904-924 (LISI…LSIA), 977-999 (MFDN…RWVS), 1002-1022 (LEVM…LFIS), and 1025-1045 (GLAA…SWGI). In terms of domain architecture, ABC transmembrane type-1 2 spans 777-1060 (LFITISLFFV…LEVKMNSFQR (284 aa)). Positions 1101 to 1336 (IEFKNVEIKY…PNSKFNKLIK (236 aa)) constitute an ABC transporter 2 domain. 1135–1142 (GRTGAGKT) serves as a coordination point for ATP.

This sequence belongs to the ABC transporter superfamily. ABCC family. Conjugate transporter (TC 3.A.1.208) subfamily.

It is found in the membrane. The chain is ABC transporter C family member 6 (abcC6) from Dictyostelium discoideum (Social amoeba).